We begin with the raw amino-acid sequence, 165 residues long: Lipoprotein signal peptidase (165 aa).

3 helical membrane-spanning segments follow: residues 9 to 29 (PFLWISAVAFFTDLITKLAVV), 65 to 85 (WQKYFFILLALAVSFMILFFL), and 97 to 119 (TGYALMIGGALANAADRAYHGFV). Residues D121 and D139 contribute to the active site. A helical transmembrane segment spans residues 134–154 (VFNVADIAICIGAGLLAIDAF).

This sequence belongs to the peptidase A8 family.

Its subcellular location is the cell inner membrane. The catalysed reaction is Release of signal peptides from bacterial membrane prolipoproteins. Hydrolyzes -Xaa-Yaa-Zaa-|-(S,diacylglyceryl)Cys-, in which Xaa is hydrophobic (preferably Leu), and Yaa (Ala or Ser) and Zaa (Gly or Ala) have small, neutral side chains.. It functions in the pathway protein modification; lipoprotein biosynthesis (signal peptide cleavage). Functionally, this protein specifically catalyzes the removal of signal peptides from prolipoproteins. The polypeptide is Lipoprotein signal peptidase (Histophilus somni (strain 2336) (Haemophilus somnus)).